Reading from the N-terminus, the 425-residue chain is Serine--tRNA ligase (425 aa).

L-serine is bound at residue 231–233 (TAE). 262–264 (RSE) lines the ATP pocket. Glutamate 285 serves as a coordination point for L-serine. An ATP-binding site is contributed by 349–352 (EISS). Serine 385 lines the L-serine pocket.

The protein belongs to the class-II aminoacyl-tRNA synthetase family. Type-1 seryl-tRNA synthetase subfamily. In terms of assembly, homodimer. The tRNA molecule binds across the dimer.

The protein resides in the cytoplasm. The catalysed reaction is tRNA(Ser) + L-serine + ATP = L-seryl-tRNA(Ser) + AMP + diphosphate + H(+). The enzyme catalyses tRNA(Sec) + L-serine + ATP = L-seryl-tRNA(Sec) + AMP + diphosphate + H(+). The protein operates within aminoacyl-tRNA biosynthesis; selenocysteinyl-tRNA(Sec) biosynthesis; L-seryl-tRNA(Sec) from L-serine and tRNA(Sec): step 1/1. Functionally, catalyzes the attachment of serine to tRNA(Ser). Is also able to aminoacylate tRNA(Sec) with serine, to form the misacylated tRNA L-seryl-tRNA(Sec), which will be further converted into selenocysteinyl-tRNA(Sec). The protein is Serine--tRNA ligase of Bacillus velezensis (strain DSM 23117 / BGSC 10A6 / LMG 26770 / FZB42) (Bacillus amyloliquefaciens subsp. plantarum).